A 388-amino-acid polypeptide reads, in one-letter code: Na(+)/H(+) antiporter NhaA (388 aa).

Helical transmembrane passes span Phe8 to Ile28, Pro33 to Leu53, Leu59 to Val79, Leu95 to Phe115, Gly125 to Ser145, Val154 to Phe174, Val179 to Trp199, Val217 to Ile237, Val259 to Val279, Ile287 to Phe307, Ile328 to Leu348, and Leu363 to Val383.

It belongs to the NhaA Na(+)/H(+) (TC 2.A.33) antiporter family.

It is found in the cell inner membrane. It catalyses the reaction Na(+)(in) + 2 H(+)(out) = Na(+)(out) + 2 H(+)(in). Functionally, na(+)/H(+) antiporter that extrudes sodium in exchange for external protons. The sequence is that of Na(+)/H(+) antiporter NhaA from Photorhabdus laumondii subsp. laumondii (strain DSM 15139 / CIP 105565 / TT01) (Photorhabdus luminescens subsp. laumondii).